Here is a 377-residue protein sequence, read N- to C-terminus: N5-carboxyaminoimidazole ribonucleotide synthase (377 aa).

ATP-binding positions include arginine 93, lysine 133, 138-144 (GYDGKGQ), 175-178 (EEFV), glutamate 183, histidine 206, and 257-258 (NE). The region spanning 97–287 (KALLDNAGVR…QFENHLRAVC (191 aa)) is the ATP-grasp domain.

This sequence belongs to the PurK/PurT family. In terms of assembly, homodimer.

The catalysed reaction is 5-amino-1-(5-phospho-beta-D-ribosyl)imidazole + hydrogencarbonate + ATP = 5-carboxyamino-1-(5-phospho-D-ribosyl)imidazole + ADP + phosphate + 2 H(+). It functions in the pathway purine metabolism; IMP biosynthesis via de novo pathway; 5-amino-1-(5-phospho-D-ribosyl)imidazole-4-carboxylate from 5-amino-1-(5-phospho-D-ribosyl)imidazole (N5-CAIR route): step 1/2. In terms of biological role, catalyzes the ATP-dependent conversion of 5-aminoimidazole ribonucleotide (AIR) and HCO(3)(-) to N5-carboxyaminoimidazole ribonucleotide (N5-CAIR). The sequence is that of N5-carboxyaminoimidazole ribonucleotide synthase from Vibrio parahaemolyticus serotype O3:K6 (strain RIMD 2210633).